A 636-amino-acid chain; its full sequence is ATP-dependent DNA helicase YoaA (636 aa).

Residues 10 to 272 form the Helicase ATP-binding domain; it reads QLAKAIPGFK…KDTQQLQKCA (263 aa). 45-52 contributes to the ATP binding site; the sequence is AGTGTGKT. Residues Cys108, Cys168, Cys173, and Cys179 each coordinate [4Fe-4S] cluster. A DEAH box motif is present at residues 225 to 228; that stretch reads DEAH.

The protein belongs to the helicase family. DinG subfamily. In terms of assembly, interacts with the DNA polymerase III subunit Chi (holC), probably as a 1:1 complex. [4Fe-4S] cluster is required as a cofactor. Requires Mg(2+) as cofactor.

It carries out the reaction Couples ATP hydrolysis with the unwinding of duplex DNA at the replication fork by translocating in the 5'-3' direction. This creates two antiparallel DNA single strands (ssDNA). The leading ssDNA polymer is the template for DNA polymerase III holoenzyme which synthesizes a continuous strand.. The enzyme catalyses ATP + H2O = ADP + phosphate + H(+). Its activity is regulated as follows. Non-hydrolyzable ATP analogs ATP-gamma-S and adenylyl-imidodiphosphate (AMP-PNP) inhibit helicase activity. DNA-dependent ATPase and 5'-3' DNA helicase. Has single-stranded (ss)DNA-dependent ATPase activity and 5'-3' helicase activity on forked DNA; both activities were measure in a YoaA:HolC (chi) complex. Requires a 20-35 nucleotide (nt) 5'-ssDNA tail; dsDNA with a 20 nt gap is also unwound. Unwinds damaged 3' nascent ends (such as those terminated by 3' azidothymidine (AZT), 3' dideoxy-C or an abasic site on the translocating strand), to promote repair and AZT excision. Without HolC the protein has much lower activity which could be due to YoaA instability or helicase stimulation by HolC. Genetically identified as involved in the repair of replication forks and tolerance of the chain-terminating nucleoside analog AZT. May act in proofreading during nucleotide misincorporation, it appears to aid in the removal of potential A-to-T transversion mutations in ndk mutants. This chain is ATP-dependent DNA helicase YoaA (yoaA), found in Escherichia coli (strain K12).